A 209-amino-acid chain; its full sequence is Orotate phosphoribosyltransferase (209 aa).

5-phospho-alpha-D-ribose 1-diphosphate is bound by residues R96, K100, H102, and 122 to 130 (EDLISTGGS). S126 serves as a coordination point for orotate.

This sequence belongs to the purine/pyrimidine phosphoribosyltransferase family. PyrE subfamily. In terms of assembly, homodimer. Mg(2+) is required as a cofactor.

It catalyses the reaction orotidine 5'-phosphate + diphosphate = orotate + 5-phospho-alpha-D-ribose 1-diphosphate. It functions in the pathway pyrimidine metabolism; UMP biosynthesis via de novo pathway; UMP from orotate: step 1/2. Functionally, catalyzes the transfer of a ribosyl phosphate group from 5-phosphoribose 1-diphosphate to orotate, leading to the formation of orotidine monophosphate (OMP). The polypeptide is Orotate phosphoribosyltransferase (Streptococcus sanguinis (strain SK36)).